A 344-amino-acid chain; its full sequence is Ig alpha chain C region (344 aa).

Positions 6 to 99 (PTIYPLTLPP…SNPVQELDVN (94 aa)) constitute an Ig-like 1 domain. Cystine bridges form between Cys26-Cys84 and Cys76-Cys100. Asn38 and Asn99 each carry an N-linked (GlcNAc...) asparagine glycan. Ser101 carries an O-linked (GalNAc) serine; in variant MOPC 47A glycan. 2 disulfide bridges follow: Cys114-Cys171 and Cys138-Cys195. Ig-like domains follow at residues 116–206 (PSLS…GTLT) and 219–321 (PQVH…KTID). Asn329 is a glycosylation site (N-linked (GlcNAc...) asparagine). N-linked (GlcNAc...) asparagine; in variant M511 glycosylation occurs at Ser331.

Ig alpha is the major immunoglobulin class in body secretions. It may serve both to defend against local infection and to prevent access of foreign antigens to the general immunologic system. The polypeptide is Ig alpha chain C region (Mus musculus (Mouse)).